A 428-amino-acid chain; its full sequence is Light-independent protochlorophyllide reductase subunit N (428 aa).

[4Fe-4S] cluster contacts are provided by Cys29, Cys54, and Cys115.

This sequence belongs to the BchN/ChlN family. In terms of assembly, protochlorophyllide reductase is composed of three subunits; BchL, BchN and BchB. Forms a heterotetramer of two BchB and two BchN subunits. Requires [4Fe-4S] cluster as cofactor.

It carries out the reaction chlorophyllide a + oxidized 2[4Fe-4S]-[ferredoxin] + 2 ADP + 2 phosphate = protochlorophyllide a + reduced 2[4Fe-4S]-[ferredoxin] + 2 ATP + 2 H2O. Its pathway is porphyrin-containing compound metabolism; bacteriochlorophyll biosynthesis (light-independent). Its function is as follows. Component of the dark-operative protochlorophyllide reductase (DPOR) that uses Mg-ATP and reduced ferredoxin to reduce ring D of protochlorophyllide (Pchlide) to form chlorophyllide a (Chlide). This reaction is light-independent. The NB-protein (BchN-BchB) is the catalytic component of the complex. This is Light-independent protochlorophyllide reductase subunit N from Cereibacter sphaeroides (strain KD131 / KCTC 12085) (Rhodobacter sphaeroides).